Reading from the N-terminus, the 138-residue chain is MRTLWIVAMCLIGVEGNLFQFARMIDAKQEAFSFFKYISYGCYCGWGGQGTPKDASDRCCFVHDCCYARVKGCNPKLVEYSYSYRTGKIVCETYNRCKRAVCECDRVAAICLGQNVNTYNKGYMFLSSYYCRQKSEQC.

Residues 1-16 (MRTLWIVAMCLIGVEG) form the signal peptide. 7 cysteine pairs are disulfide-bonded: Cys-42–Cys-131, Cys-44–Cys-60, Cys-59–Cys-111, Cys-65–Cys-138, Cys-66–Cys-104, Cys-73–Cys-97, and Cys-91–Cys-102. Residues Tyr-43, Gly-45, and Gly-47 each coordinate Ca(2+). Residue His-63 is part of the active site. Residue Asp-64 coordinates Ca(2+). Asp-105 is an active-site residue.

Ca(2+) serves as cofactor. In terms of tissue distribution, expressed by the venom gland.

It is found in the secreted. The catalysed reaction is a 1,2-diacyl-sn-glycero-3-phosphocholine + H2O = a 1-acyl-sn-glycero-3-phosphocholine + a fatty acid + H(+). Functionally, exhibits high hydrolytic activities and shows strong preference for the anionic micelles (dPPC with deoxycholate) to the zwitterionic micelles (dPPC with Triton X-100). PLA2 catalyzes the calcium-dependent hydrolysis of the 2-acyl groups in 3-sn-phosphoglycerides. The protein is Basic phospholipase A2 Drk-b1 of Daboia russelii (Russel's viper).